Here is a 240-residue protein sequence, read N- to C-terminus: MSSSPRSPDARPLKVRVKSARTRSSSSQKWLQRQLNDPYVARAKREGWRSRAAFKLIEMDEKLHVLKRGMRIVDLGAAPGGWSQVAAKKIGAAEGQGKIVAIDLLEMDAVTGVMFAQMDFLDPTAPERLFAMLDGKADLVMSDMAANTTGHKKTDHLKIIALVELAADFARQVLAPGGAFIAKVFQGGTEGTLLADLKRDYAQVRHLKPAASRADSAELYLVATGFRGSADRTEDETDEA.

The tract at residues 1–28 is disordered; the sequence is MSSSPRSPDARPLKVRVKSARTRSSSSQ. Residues G80, W82, D103, D119, and D143 each coordinate S-adenosyl-L-methionine. K183 functions as the Proton acceptor in the catalytic mechanism.

It belongs to the class I-like SAM-binding methyltransferase superfamily. RNA methyltransferase RlmE family.

The protein resides in the cytoplasm. The enzyme catalyses uridine(2552) in 23S rRNA + S-adenosyl-L-methionine = 2'-O-methyluridine(2552) in 23S rRNA + S-adenosyl-L-homocysteine + H(+). In terms of biological role, specifically methylates the uridine in position 2552 of 23S rRNA at the 2'-O position of the ribose in the fully assembled 50S ribosomal subunit. This is Ribosomal RNA large subunit methyltransferase E from Azorhizobium caulinodans (strain ATCC 43989 / DSM 5975 / JCM 20966 / LMG 6465 / NBRC 14845 / NCIMB 13405 / ORS 571).